The sequence spans 250 residues: Golgi SNAP receptor complex member 1 (250 aa).

At Ala2 the chain carries N-acetylalanine. At 2–229 (AAGTSNYWED…QRINLRKRRD (228 aa)) the chain is on the cytoplasmic side. Residues 9 to 30 (WEDLRKQARQLENELDLKLVSF) adopt a coiled-coil conformation. Positions 38–59 (SHSSARDGGRDRYSSDTTPLLN) are disordered. Positions 41 to 51 (SARDGGRDRYS) are enriched in basic and acidic residues. A coiled-coil region spans residues 68 to 95 (ETMAIEIEQLLARLTGVNDKMAEYTNSA). Phosphoserine is present on Ser141. The chain crosses the membrane as a helical; Anchor for type IV membrane protein span at residues 230–250 (SLILGGVIGICTILLLLYAFH).

Belongs to the GOSR1 family. Component of several multiprotein Golgi SNARE complexes. Identified in a SNARE complex with BET1, STX5 and YKT6, in a SNARE complex with BET1L, STX5 and YKT6, in a SNARE complex with STX5, GOSR2, SEC22B and BET1, and in complex with STX5 and COG3. Interacts with GABARAPL2.

The protein resides in the golgi apparatus membrane. In terms of biological role, involved in transport from the ER to the Golgi apparatus as well as in intra-Golgi transport. It belongs to a super-family of proteins called t-SNAREs or soluble NSF (N-ethylmaleimide-sensitive factor) attachment protein receptor. May play a protective role against hydrogen peroxide induced cytotoxicity under glutathione depleted conditions in neuronal cells by regulating the intracellular ROS levels via inhibition of p38 MAPK (MAPK11, MAPK12, MAPK13 and MAPK14). Participates in docking and fusion stage of ER to cis-Golgi transport. Plays an important physiological role in VLDL-transport vesicle-Golgi fusion and thus in VLDL delivery to the hepatic cis-Golgi. In Cricetulus griseus (Chinese hamster), this protein is Golgi SNAP receptor complex member 1 (GOSR1).